We begin with the raw amino-acid sequence, 425 residues long: Serine--tRNA ligase (425 aa).

L-serine is bound at residue 229–231; sequence TSE. Residues 259–261 and valine 275 contribute to the ATP site; that span reads RKE. Residue glutamate 282 coordinates L-serine. Position 349–352 (349–352) interacts with ATP; that stretch reads EITS. L-serine is bound at residue threonine 384.

It belongs to the class-II aminoacyl-tRNA synthetase family. Type-1 seryl-tRNA synthetase subfamily. As to quaternary structure, homodimer. The tRNA molecule binds across the dimer.

It localises to the cytoplasm. The catalysed reaction is tRNA(Ser) + L-serine + ATP = L-seryl-tRNA(Ser) + AMP + diphosphate + H(+). It carries out the reaction tRNA(Sec) + L-serine + ATP = L-seryl-tRNA(Sec) + AMP + diphosphate + H(+). It participates in aminoacyl-tRNA biosynthesis; selenocysteinyl-tRNA(Sec) biosynthesis; L-seryl-tRNA(Sec) from L-serine and tRNA(Sec): step 1/1. In terms of biological role, catalyzes the attachment of serine to tRNA(Ser). Is also able to aminoacylate tRNA(Sec) with serine, to form the misacylated tRNA L-seryl-tRNA(Sec), which will be further converted into selenocysteinyl-tRNA(Sec). This Borreliella afzelii (strain PKo) (Borrelia afzelii) protein is Serine--tRNA ligase.